The chain runs to 428 residues: Glutamate-1-semialdehyde 2,1-aminomutase (428 aa).

Residue lysine 265 is modified to N6-(pyridoxal phosphate)lysine.

This sequence belongs to the class-III pyridoxal-phosphate-dependent aminotransferase family. HemL subfamily. As to quaternary structure, homodimer. Pyridoxal 5'-phosphate serves as cofactor.

It localises to the cytoplasm. It carries out the reaction (S)-4-amino-5-oxopentanoate = 5-aminolevulinate. The protein operates within porphyrin-containing compound metabolism; protoporphyrin-IX biosynthesis; 5-aminolevulinate from L-glutamyl-tRNA(Glu): step 2/2. In Ruthia magnifica subsp. Calyptogena magnifica, this protein is Glutamate-1-semialdehyde 2,1-aminomutase.